Consider the following 58-residue polypeptide: Conotoxin Im5.4 (58 aa).

A signal peptide spans 1–18; the sequence is MRCLPVVVFLLLLLSAAA. A propeptide spanning residues 19–28 is cleaved from the precursor; sequence APGVGSKTER.

The protein belongs to the conotoxin T superfamily. Contains 2 disulfide bonds that can be either 'C1-C3, C2-C4' or 'C1-C4, C2-C3', since these disulfide connectivities have been observed for conotoxins with cysteine framework V (for examples, see AC P0DQQ7 and AC P81755). In terms of tissue distribution, expressed by the venom duct.

It is found in the secreted. Its function is as follows. Probable neurotoxin. The polypeptide is Conotoxin Im5.4 (Conus imperialis (Imperial cone)).